A 291-amino-acid chain; its full sequence is Transmembrane protein 41B (291 aa).

The disordered stretch occupies residues 1 to 38 (MAKGRVAERSQMGADHTTPVGDGAAGTRGPAAPGSRDY). Thr-18 is subject to Phosphothreonine. Residues 21 to 34 (GDGAAGTRGPAAPG) show a composition bias toward low complexity. A Phosphoserine modification is found at Ser-35. 6 helical membrane-spanning segments follow: residues 52–72 (MSLLILVSIFLSAAFVMFLVY), 109–129 (FYVQVLVAYFATYIFLQTFAI), 147–169 (LALFLVCLCSGLGASFCYMLSYL), 197–217 (LINYIIFLRITPFLPNWFINI), 225–245 (PLKVFFIGTFLGVAPPSFVAI), and 262–282 (SWNSIFILMILAVLSILPAIF). The tract at residues 140 to 251 (GFLYPFPLAL…FVAIKAGTTL (112 aa)) is VTT domain; required for its function in autophagy.

It belongs to the TMEM41 family. As to quaternary structure, interacts with VMP1. Interacts with COPA, COPB1, VDAC1 and ERLIN2. Interacts with ATG2A. Interacts with SURF4.

It localises to the endoplasmic reticulum membrane. Its subcellular location is the endomembrane system. The enzyme catalyses a 1,2-diacyl-sn-glycero-3-phospho-L-serine(in) = a 1,2-diacyl-sn-glycero-3-phospho-L-serine(out). It carries out the reaction cholesterol(in) = cholesterol(out). It catalyses the reaction a 1,2-diacyl-sn-glycero-3-phosphocholine(in) = a 1,2-diacyl-sn-glycero-3-phosphocholine(out). The catalysed reaction is a 1,2-diacyl-sn-glycero-3-phosphoethanolamine(in) = a 1,2-diacyl-sn-glycero-3-phosphoethanolamine(out). In terms of biological role, phospholipid scramblase involved in lipid homeostasis and membrane dynamics processes. Has phospholipid scramblase activity toward cholesterol and phosphatidylserine, as well as phosphatidylethanolamine and phosphatidylcholine. Required for autophagosome formation: participates in early stages of autophagosome biogenesis at the endoplasmic reticulum (ER) membrane by reequilibrating the leaflets of the ER as lipids are extracted by ATG2 (ATG2A or ATG2B) to mediate autophagosome assembly. In addition to autophagy, involved in other processes in which phospholipid scramblase activity is required. Required for normal motor neuron development. This Pongo abelii (Sumatran orangutan) protein is Transmembrane protein 41B.